The sequence spans 176 residues: Large ribosomal subunit protein uL6 (176 aa).

It belongs to the universal ribosomal protein uL6 family. Part of the 50S ribosomal subunit.

In terms of biological role, this protein binds to the 23S rRNA, and is important in its secondary structure. It is located near the subunit interface in the base of the L7/L12 stalk, and near the tRNA binding site of the peptidyltransferase center. The polypeptide is Large ribosomal subunit protein uL6 (Methanothrix thermoacetophila (strain DSM 6194 / JCM 14653 / NBRC 101360 / PT) (Methanosaeta thermophila)).